The following is a 149-amino-acid chain: Large ribosomal subunit protein bL9 (149 aa).

Belongs to the bacterial ribosomal protein bL9 family.

Functionally, binds to the 23S rRNA. This Anaeromyxobacter dehalogenans (strain 2CP-1 / ATCC BAA-258) protein is Large ribosomal subunit protein bL9.